The sequence spans 119 residues: Autophagy-related protein 8A (119 aa).

Glycine 117 carries the Phosphatidylethanolamine amidated glycine lipid modification. Positions 118-119 are cleaved as a propeptide — removed in mature form; sequence SA.

Belongs to the ATG8 family. Interacts with ATG4. In terms of processing, the C-terminal 2 residues are removed by ATG4 to expose Gly-117 at the C-terminus. The C-terminal Gly is then amidated with phosphatidylethanolamine by an activating system similar to that for ubiquitin. As to expression, constitutively expressed.

Its subcellular location is the cytoplasmic vesicle. It is found in the autophagosome membrane. It localises to the vacuole membrane. The protein localises to the cytoplasm. The protein resides in the cytoskeleton. In terms of biological role, ubiquitin-like modifier involved in cytoplasm to vacuole transport (Cvt) vesicles and autophagosomes formation. May mediate the delivery of the vesicles and autophagosomes to the vacuole via the microtubule cytoskeleton. Its function is as follows. Ubiquitin-like modifier involved in autophagosomes formation. May mediate the delivery of the autophagosomes to the vacuole via the microtubule cytoskeleton. The polypeptide is Autophagy-related protein 8A (ATG8A) (Oryza sativa subsp. indica (Rice)).